The primary structure comprises 319 residues: GTP 3',8-cyclase (319 aa).

Residues 4–219 enclose the Radical SAM core domain; it reads KHGRKINYLR…SKHSDLIPVE (216 aa). Arg-13 contributes to the GTP binding site. [4Fe-4S] cluster contacts are provided by Cys-20 and Cys-24. Residue Tyr-26 coordinates S-adenosyl-L-methionine. Cys-27 is a binding site for [4Fe-4S] cluster. Arg-63 contacts GTP. Position 67 (Gly-67) interacts with S-adenosyl-L-methionine. Thr-94 provides a ligand contact to GTP. Ser-118 is an S-adenosyl-L-methionine binding site. Residue Lys-155 participates in GTP binding. S-adenosyl-L-methionine is bound at residue Met-189. [4Fe-4S] cluster contacts are provided by Cys-249 and Cys-252. Position 254 to 256 (254 to 256) interacts with GTP; sequence RVR. Position 266 (Cys-266) interacts with [4Fe-4S] cluster.

It belongs to the radical SAM superfamily. MoaA family. Monomer and homodimer. [4Fe-4S] cluster is required as a cofactor.

It catalyses the reaction GTP + AH2 + S-adenosyl-L-methionine = (8S)-3',8-cyclo-7,8-dihydroguanosine 5'-triphosphate + 5'-deoxyadenosine + L-methionine + A + H(+). It functions in the pathway cofactor biosynthesis; molybdopterin biosynthesis. Its function is as follows. Catalyzes the cyclization of GTP to (8S)-3',8-cyclo-7,8-dihydroguanosine 5'-triphosphate. In Clostridium botulinum (strain Okra / Type B1), this protein is GTP 3',8-cyclase.